A 145-amino-acid chain; its full sequence is Basic phospholipase A2 cL038 (145 aa).

Residues 1-21 form the signal peptide; sequence MYPAHLLVLLAVCVSLLGASA. Positions 22–27 are excised as a propeptide; the sequence is IPPLPL. 7 disulfides stabilise this stretch: Cys-38/Cys-98, Cys-54/Cys-144, Cys-56/Cys-72, Cys-71/Cys-125, Cys-78/Cys-118, Cys-87/Cys-111, and Cys-105/Cys-116. Ca(2+) contacts are provided by Tyr-55, Gly-57, and Gly-59. His-75 is an active-site residue. Residue Asp-76 coordinates Ca(2+). Asp-119 is a catalytic residue.

It belongs to the phospholipase A2 family. Group I subfamily. D49 sub-subfamily. It depends on Ca(2+) as a cofactor. In terms of tissue distribution, expressed by the venom gland.

It localises to the secreted. It carries out the reaction a 1,2-diacyl-sn-glycero-3-phosphocholine + H2O = a 1-acyl-sn-glycero-3-phosphocholine + a fatty acid + H(+). PLA2 catalyzes the calcium-dependent hydrolysis of the 2-acyl groups in 3-sn-phosphoglycerides. This chain is Basic phospholipase A2 cL038, found in Laticauda semifasciata (Black-banded sea krait).